The chain runs to 208 residues: EF-hand protein 5 variant 1 (208 aa).

The tract at residues Met1–Gln34 is disordered. 4 EF-hand domains span residues Met64–Glu98, Glu99–Asp134, Thr135–Arg170, and Ser171–Asn206. Ca(2+)-binding residues include Glu118, Asp123, Asp148, Thr152, and Tyr154.

In Trypanosoma cruzi, this protein is EF-hand protein 5 variant 1.